The following is a 328-amino-acid chain: MEKINYLLPEESAEMTLNQVKSLRQIEGRLRKLFSLKNYQEVMPPSFEYTQLYTALESNGKTFNQEKMFQFIKHEGQSITLRYDFTLPLVRLYSQIKDSTSARYSYFGKIFRKEKRHKGRSTENYQIGIELFGESADKSELEILSLALQVIEQLGLNKTVFEIGSAKFFQRLCQLADGSTELLTELLLKKDLSGLNAFIEKNNFSKELRGLLKEIFITNELSRLENLVTNTKDDVLISSFDQLKEFSEKLSMIKPIIIDLGMVPKMDYYTDLMFKAYSSAANQPILSGGRYDQLLSNFQEEAFAIGFCCHMDTILKALERQELEEDND.

It belongs to the class-II aminoacyl-tRNA synthetase family. HisZ subfamily. In terms of assembly, heterooctamer composed of four HisG and four HisZ subunits.

It localises to the cytoplasm. It participates in amino-acid biosynthesis; L-histidine biosynthesis; L-histidine from 5-phospho-alpha-D-ribose 1-diphosphate: step 1/9. In terms of biological role, required for the first step of histidine biosynthesis. May allow the feedback regulation of ATP phosphoribosyltransferase activity by histidine. The sequence is that of ATP phosphoribosyltransferase regulatory subunit (hisZ) from Lactococcus lactis subsp. lactis (strain IL1403) (Streptococcus lactis).